The following is a 612-amino-acid chain: RNA-binding protein MRN1 (612 aa).

A compositionally biased stretch (low complexity) spans 1–28 (MVVSYNNNNNNNNNNNNNNISNNNNNNN). Disordered regions lie at residues 1–57 (MVVS…TYAS) and 105–125 (PTQFQTKQRNDSQQQRFSQEQ). Composition is skewed to polar residues over residues 42–57 (YQQSSSSGPYQETYAS) and 115–125 (DSQQQRFSQEQ). RRM domains are found at residues 201–274 (RTVY…WGKP), 292–379 (RNVY…KTQQ), 431–504 (RTVY…WGKH), and 522–602 (RNVY…FGKD).

Its subcellular location is the cytoplasm. RNA-binding protein that binds specific categories of mRNAs, including those that contain upstream open reading frames (uORFs) and internal ribosome entry sites (IRES). Probably involved in translational regulation. This is RNA-binding protein MRN1 (MRN1) from Saccharomyces cerevisiae (strain ATCC 204508 / S288c) (Baker's yeast).